Here is a 350-residue protein sequence, read N- to C-terminus: dTDP-D-glucose 4,6-dehydratase (350 aa).

Threonine 142 is a substrate binding site. Aspartate 143 acts as the Proton donor in catalysis. Catalysis depends on proton acceptor residues glutamate 144 and tyrosine 166.

It belongs to the NAD(P)-dependent epimerase/dehydratase family. dTDP-glucose dehydratase subfamily. It depends on NAD(+) as a cofactor.

The enzyme catalyses dTDP-alpha-D-glucose = dTDP-4-dehydro-6-deoxy-alpha-D-glucose + H2O. This chain is dTDP-D-glucose 4,6-dehydratase (TGDS), found in Homo sapiens (Human).